Reading from the N-terminus, the 98-residue chain is Large ribosomal subunit protein uL23 (98 aa).

This sequence belongs to the universal ribosomal protein uL23 family. In terms of assembly, part of the 50S ribosomal subunit. Contacts protein L29, and trigger factor when it is bound to the ribosome.

Functionally, one of the early assembly proteins it binds 23S rRNA. One of the proteins that surrounds the polypeptide exit tunnel on the outside of the ribosome. Forms the main docking site for trigger factor binding to the ribosome. This Herpetosiphon aurantiacus (strain ATCC 23779 / DSM 785 / 114-95) protein is Large ribosomal subunit protein uL23.